The sequence spans 434 residues: Serine/threonine-protein kinase Sgk1-B (434 aa).

The disordered stretch occupies residues 68 to 94 (ESELLNENSSPPPSHSQQINLGPSSNP). The region spanning 101–358 (FQFLKIIGKG…FMEIKNHIFF (258 aa)) is the Protein kinase domain. ATP contacts are provided by residues 107–115 (IGKGSFGKV) and lysine 130. The Proton acceptor role is filled by aspartate 225. The AGC-kinase C-terminal domain occupies 359–434 (SPIDWDDLIN…SYAPPMDSYL (76 aa)).

This sequence belongs to the protein kinase superfamily. AGC Ser/Thr protein kinase family.

It localises to the cytoplasm. Its subcellular location is the nucleus. The protein resides in the endoplasmic reticulum. It catalyses the reaction L-seryl-[protein] + ATP = O-phospho-L-seryl-[protein] + ADP + H(+). The catalysed reaction is L-threonyl-[protein] + ATP = O-phospho-L-threonyl-[protein] + ADP + H(+). Functionally, protein kinase that may play an important role in cellular stress response. Plays an important role in activating certain potassium, sodium, and chloride channels, suggesting an involvement in the regulation of processes such as cell survival, neuronal excitability and renal sodium excretion. This Xenopus laevis (African clawed frog) protein is Serine/threonine-protein kinase Sgk1-B (sgk1-b).